The following is a 313-amino-acid chain: Protein-methionine-sulfoxide reductase catalytic subunit MsrP (313 aa).

Residues 1-45 (MPAYRPPHIASSEITPKSFYLSRRNFLGTAAGLAAIGLAGREAIA) constitute a signal peptide (tat-type signal). Residues Asn71, 74-75 (YE), Cys128, Thr163, Asn213, Arg218, and 229-231 (GIK) contribute to the Mo-molybdopterin site.

The protein belongs to the MsrP family. As to quaternary structure, heterodimer of a catalytic subunit (MsrP) and a heme-binding subunit (MsrQ). Mo-molybdopterin serves as cofactor. Post-translationally, predicted to be exported by the Tat system. The position of the signal peptide cleavage has not been experimentally proven.

It localises to the periplasm. It carries out the reaction L-methionyl-[protein] + a quinone + H2O = L-methionyl-(S)-S-oxide-[protein] + a quinol. The catalysed reaction is L-methionyl-[protein] + a quinone + H2O = L-methionyl-(R)-S-oxide-[protein] + a quinol. Part of the MsrPQ system that repairs oxidized periplasmic proteins containing methionine sulfoxide residues (Met-O), using respiratory chain electrons. Thus protects these proteins from oxidative-stress damage caused by reactive species of oxygen and chlorine generated by the host defense mechanisms. MsrPQ is essential for the maintenance of envelope integrity under bleach stress, rescuing a wide series of structurally unrelated periplasmic proteins from methionine oxidation. The catalytic subunit MsrP is non-stereospecific, being able to reduce both (R-) and (S-) diastereoisomers of methionine sulfoxide. The protein is Protein-methionine-sulfoxide reductase catalytic subunit MsrP of Agrobacterium fabrum (strain C58 / ATCC 33970) (Agrobacterium tumefaciens (strain C58)).